Consider the following 229-residue polypeptide: 5'-methylthioadenosine/S-adenosylhomocysteine nucleosidase (229 aa).

Glutamate 12 acts as the Proton acceptor in catalysis. Substrate is bound by residues glycine 78, methionine 152, and 173–174 (ME). Aspartate 197 (proton donor) is an active-site residue.

This sequence belongs to the PNP/UDP phosphorylase family. MtnN subfamily.

It catalyses the reaction S-adenosyl-L-homocysteine + H2O = S-(5-deoxy-D-ribos-5-yl)-L-homocysteine + adenine. The catalysed reaction is S-methyl-5'-thioadenosine + H2O = 5-(methylsulfanyl)-D-ribose + adenine. The enzyme catalyses 5'-deoxyadenosine + H2O = 5-deoxy-D-ribose + adenine. The protein operates within amino-acid biosynthesis; L-methionine biosynthesis via salvage pathway; S-methyl-5-thio-alpha-D-ribose 1-phosphate from S-methyl-5'-thioadenosine (hydrolase route): step 1/2. Catalyzes the irreversible cleavage of the glycosidic bond in both 5'-methylthioadenosine (MTA) and S-adenosylhomocysteine (SAH/AdoHcy) to adenine and the corresponding thioribose, 5'-methylthioribose and S-ribosylhomocysteine, respectively. Also cleaves 5'-deoxyadenosine, a toxic by-product of radical S-adenosylmethionine (SAM) enzymes, into 5-deoxyribose and adenine. The polypeptide is 5'-methylthioadenosine/S-adenosylhomocysteine nucleosidase (Oceanobacillus iheyensis (strain DSM 14371 / CIP 107618 / JCM 11309 / KCTC 3954 / HTE831)).